Consider the following 363-residue polypeptide: Glutamate 5-kinase (363 aa).

Lysine 3 serves as a coordination point for ATP. Substrate is bound by residues serine 43, aspartate 128, and asparagine 140. Residues 160–161 and 202–208 each bind ATP; these read TD and TGGMRTK. One can recognise a PUA domain in the interval 267–349; it reads AGAILIDDGA…REIENVLGYS (83 aa).

Belongs to the glutamate 5-kinase family.

It is found in the cytoplasm. The catalysed reaction is L-glutamate + ATP = L-glutamyl 5-phosphate + ADP. It participates in amino-acid biosynthesis; L-proline biosynthesis; L-glutamate 5-semialdehyde from L-glutamate: step 1/2. Catalyzes the transfer of a phosphate group to glutamate to form L-glutamate 5-phosphate. This is Glutamate 5-kinase from Xanthomonas axonopodis pv. citri (strain 306).